The chain runs to 2131 residues: Sodium channel protein para (2131 aa).

Topologically, residues 1-148 (MTEDSDSISE…FNPIRRVAIY (148 aa)) are cytoplasmic. Residues 35-48 (HEKQKELERKRAEG) show a composition bias toward basic and acidic residues. The segment at 35 to 84 (HEKQKELERKRAEGEVPQYGRKKKQKEIRYDDEDEDEGPQPDPTLEQGVP) is disordered. Residues 64 to 73 (YDDEDEDEGP) show a composition bias toward acidic residues. One copy of the I repeat lies at 134-467 (WMLDPFNPIR…AAKAAKLEER (334 aa)). Residues 149–172 (ILVHPLFSLFIITTILVNCILMIM) form a helical membrane-spanning segment. The Extracellular portion of the chain corresponds to 173–180 (PTTPTVES). Residues 181–199 (TEVIFTGIYTFESAVKVMA) traverse the membrane as a helical segment. Residues 200 to 212 (RGFILCPFTYLRD) lie on the Cytoplasmic side of the membrane. The chain crosses the membrane as a helical span at residues 213-231 (AWNWLDFVVIALAYVTMGI). The Extracellular portion of the chain corresponds to 232-237 (DLGNLA). Residues 238 to 257 (ALRTFRVLRALKTVAIVPGL) form a helical; Voltage-sensor membrane-spanning segment. Residues 258 to 273 (KTIVGAVIESVKNLRD) lie on the Cytoplasmic side of the membrane. A helical membrane pass occupies residues 274–297 (VIILTMFSLSVFALMGLQIYMGVL). The Extracellular portion of the chain corresponds to 298-373 (TQKCIKKFPL…PNYGYTSFDS (76 aa)). The cysteines at positions 301 and 350 are disulfide-linked. N313, N325, and N343 each carry an N-linked (GlcNAc...) asparagine glycan. Positions 374-398 (FGWAFLSAFRLMTQDFWEDLYQLVL) form an intramembrane region, pore-forming. Residues 399 to 405 (RAAGPWH) lie on the Extracellular side of the membrane. The helical transmembrane segment at 406 to 427 (MLFFIVIIFLGSFYLVNLILAI) threads the bilayer. Residues 428 to 812 (VAMSYDELQK…VWLKFQEWVS (385 aa)) lie on the Cytoplasmic side of the membrane. Phosphoserine; by PKA occurs at positions 553 and 570. Disordered stretches follow at residues 553–572 (STTSLSLPGSPFNIRRGSRS) and 671–691 (KESKLRNRNTRNQSVGATNGG). Residues 680 to 691 (TRNQSVGATNGG) are compositionally biased toward polar residues. One copy of the II repeat lies at 799 to 1069 (DCCWVWLKFQ…IAEAFNRIGR (271 aa)). The chain crosses the membrane as a helical span at residues 813–837 (LIVFDPFVELFITLCIVVNTMFMAM). Residues 838 to 848 (DHHDMNKEMER) lie on the Extracellular side of the membrane. The chain crosses the membrane as a helical span at residues 849–873 (VLKSGNYFFTATFAIEATMKLMAMS). The Cytoplasmic portion of the chain corresponds to 874–880 (PKYYFQE). The helical transmembrane segment at 881 to 900 (GWNIFDFIIVALSLLELGLE) threads the bilayer. Residues 901 to 906 (GVQGLS) are Extracellular-facing. The helical; Voltage-sensor transmembrane segment at 907–926 (VLRSFRLLRVFKLAKSWPTL) threads the bilayer. Residues 927–941 (NLLISIMGRTMGALG) are Cytoplasmic-facing. Residues 942–963 (NLTFVLCIIIFIFAVMGMQLFG) traverse the membrane as a helical segment. Residues 964–985 (KNYHDHKDRFPDGDLPRWNFTD) are Extracellular-facing. An N-linked (GlcNAc...) asparagine glycan is attached at N982. Residues 986–1006 (FMHSFMIVFRVLCGEWIESMW) constitute an intramembrane region (pore-forming). Residues 1007 to 1013 (DCMYVGD) are Extracellular-facing. A disulfide bridge connects residues C1008 and C1016. A helical transmembrane segment spans residues 1014–1041 (VSCIPFFLATVVIGNLVVLNLFLALLLS). The Cytoplasmic segment spans residues 1042-1296 (NFGSSSLSAP…WGNLRLKTFQ (255 aa)). Residues 1166–1240 (DMKNNKPKKS…LDEEGECEEG (75 aa)) are disordered. Over residues 1177 to 1194 (YLNNATDDDTASINSYGS) the composition is skewed to polar residues. Basic and acidic residues predominate over residues 1199 to 1225 (PFKDESHKGSAETMEGEEKRDASKEDL). Over residues 1226–1240 (GLDEELDEEGECEEG) the composition is skewed to acidic residues. The stretch at 1284–1591 (WQGWGNLRLK…QKKYYNAMKK (308 aa)) is one III repeat. The chain crosses the membrane as a helical span at residues 1297–1320 (LIENKYFETAVITMILMSSLALAL). Over 1321–1334 (EDVHLPQRPILQDI) the chain is Extracellular. The helical transmembrane segment at 1335–1359 (LYYMDRIFTVIFFLEMLIKWLALGF) threads the bilayer. At 1360–1365 (KVYFTN) the chain is on the cytoplasmic side. Residues 1366-1387 (AWCWLDFVIVMVSLINFVASLV) form a helical membrane-spanning segment. Residues 1388 to 1391 (GAGG) are Extracellular-facing. The chain crosses the membrane as a helical; Voltage-sensor span at residues 1392-1413 (IQAFKTMRTLRALRPLRAMSRM). At 1414 to 1432 (QGMRVVVNALVQAIPSIFN) the chain is on the cytoplasmic side. A helical membrane pass occupies residues 1433-1454 (VLLVCLIFWLIFAIMGVQLFAG). Residues 1455–1495 (KYFKCEDMNGTKLSHEIIPNRNACESENYTWVNSAMNFDHV) lie on the Extracellular side of the membrane. N-linked (GlcNAc...) asparagine glycosylation is found at N1463 and N1482. The segment at residues 1496–1517 (GNAYLCLFQVATFKGWIQIMND) is an intramembrane region (pore-forming). Residues 1518 to 1533 (AIDSREVDKQPIRETN) lie on the Extracellular side of the membrane. A helical membrane pass occupies residues 1534–1560 (IYMYLYFVFFIIFGSFFTLNLFIGVII). At 1561 to 1614 (DNFNEQKKKAGGSLEMFMTEDQKKYYNAMKKMGSKKPLKAIPRPRWRPQAIVFE) the chain is on the cytoplasmic side. The stretch at 1601–1862 (IPRPRWRPQA…NMYIAVILEN (262 aa)) is one IV repeat. The helical transmembrane segment at 1615 to 1638 (IVTDKKFDIIIMLFIGLNMFTMTL) threads the bilayer. The Extracellular portion of the chain corresponds to 1639–1649 (DRYDASDTYNA). The chain crosses the membrane as a helical span at residues 1650-1673 (VLDYLNAIFVVIFSSECLLKIFAL). Topologically, residues 1674–1679 (RYHYFI) are cytoplasmic. The helical transmembrane segment at 1680-1703 (EPWNLFDVVVVILSILGLVLSDII) threads the bilayer. Topologically, residues 1704-1713 (EKYFVSPTLL) are extracellular. A helical; Voltage-sensor membrane pass occupies residues 1714 to 1735 (RVVRVAKVGRVLRLVKGAKGIR). The Cytoplasmic portion of the chain corresponds to 1736–1750 (TLLFALAMSLPALFN). The helical transmembrane segment at 1751-1773 (ICLLLFLVMFIFAIFGMSFFMHV) threads the bilayer. Topologically, residues 1774-1787 (KEKSGINDVYNFKT) are extracellular. Positions 1788–1810 (FGQSMILLFQMSTSAGWDGVLDA) form an intramembrane region, pore-forming. Residues 1811–1835 (IINEEACDPPDNDKGYPGNCGSATV) lie on the Extracellular side of the membrane. A helical membrane pass occupies residues 1836–1860 (GITFLLSYLVISFLIVINMYIAVIL). The Cytoplasmic portion of the chain corresponds to 1861 to 2131 (ENYSQATEDV…PSITSRTADV (271 aa)). Residues 1877 to 1912 (DDYDMYYEIWQQFDPEGTQYIRYDQLSEFLDVLEPP) enclose the EF-hand domain. The segment at 2001–2096 (HKARGEGGGS…GSPGAGSAGR (96 aa)) is disordered. A compositionally biased stretch (acidic residues) spans 2021–2035 (GDPDAGDPAPDEATD). The segment covering 2068 to 2088 (AAAAAAAAAAAAAAGTTTAGS) has biased composition (low complexity).

Belongs to the sodium channel (TC 1.A.1.10) family. Para subfamily.

The protein resides in the cell membrane. Mediates the voltage-dependent sodium ion permeability of excitable membranes. Assuming opened or closed conformations in response to the voltage difference across the membrane, the protein forms a sodium-selective channel through which Na(+) ions may pass in accordance with their electrochemical gradient. The protein is Sodium channel protein para (para) of Drosophila melanogaster (Fruit fly).